Here is a 408-residue protein sequence, read N- to C-terminus: Mitochondrial outer membrane protein SLC25A46 (408 aa).

2 disordered regions span residues 1-23 (MHPRRPEGFDGLGYRGGGREEPC) and 52-80 (HWGEKTPPYGAGTPLGAAGLNEEPGLGAG). Over residues 66 to 76 (LGAAGLNEEPG) the composition is skewed to low complexity. A Solcar 1 repeat occupies 86–177 (QLNRFAGFGI…GIISEFTPLP (92 aa)). 6 helical membrane-spanning segments follow: residues 93 to 113 (FGIGLASLFTENVLAHPCIVL), 157 to 177 (FIVQGITLGTEGIISEFTPLP), 189 to 209 (IGGHLLLKGLTHVIAMPFYSA), 248 to 268 (LLPLMVLIFPTALHGVLHYVI), 304 to 324 (FPELIASFAASLCADVMLYPL), and 373 to 393 (LGFYKGFGAVVVQYTLHVAVL). The stretch at 301–403 (DAYFPELIAS…QLTKIIYSTL (103 aa)) is one Solcar 2 repeat.

It belongs to the mitochondrial carrier (TC 2.A.29) family.

It localises to the mitochondrion outer membrane. Its function is as follows. Transmembrane protein of the mitochondrial outer membrane that controls mitochondrial organization. May regulate the assembly of the MICOS (mitochondrial contact site and cristae organizing system) complex which is essential to the biogenesis and dynamics of mitochondrial cristae, the inwards folds of the inner mitochondrial membrane. Through its interaction with the EMC (endoplasmic reticulum membrane protein complex), could regulate mitochondrial lipid homeostasis and thereby mitochondrial fission. The sequence is that of Mitochondrial outer membrane protein SLC25A46 from Gallus gallus (Chicken).